A 364-amino-acid polypeptide reads, in one-letter code: DNA replication and repair protein RecF (364 aa).

An ATP-binding site is contributed by 30 to 37 (GNNAQGKT).

It belongs to the RecF family.

The protein resides in the cytoplasm. In terms of biological role, the RecF protein is involved in DNA metabolism; it is required for DNA replication and normal SOS inducibility. RecF binds preferentially to single-stranded, linear DNA. It also seems to bind ATP. The polypeptide is DNA replication and repair protein RecF (Clostridium botulinum (strain 657 / Type Ba4)).